A 365-amino-acid chain; its full sequence is TD and POZ domain-containing protein 1 (365 aa).

The 131-residue stretch at 19–149 folds into the MATH domain; that stretch reads KFCYKWTISN…EDQLTICCKV (131 aa). Residues 188-250 enclose the BTB domain; it reads TDCCLLVAGH…EMMGFIYTGK (63 aa).

The protein belongs to the Tdpoz family.

This is TD and POZ domain-containing protein 1 from Mus musculus (Mouse).